A 657-amino-acid polypeptide reads, in one-letter code: Archaeal Lon protease (657 aa).

Residues 1–123 lie on the Cytoplasmic side of the membrane; the sequence is MEENIESVEE…KAEREKRDRS (123 aa). ATP is bound at residue 57-64; it reads GEPGTGKS. Residues 124–144 traverse the membrane as a helical segment; it reads RSIMFVIFSVVLLGIIAAIVL. Arg-145 is a topological domain (extracellular). The chain crosses the membrane as a helical span at residues 146-166; sequence SITLIFFAIMAAAFLYMAMAF. The Cytoplasmic segment spans residues 167–657; it reads NPVIRNERAM…ATTRAGNNAA (491 aa). In terms of domain architecture, Lon proteolytic spans 433–618; sequence GSVVGMVNGL…EDVLRVALVN (186 aa). Catalysis depends on residues Ser-525 and Lys-568.

It belongs to the peptidase S16 family. Archaeal LonB subfamily. As to quaternary structure, homohexamer. Organized in a ring with a central cavity.

Its subcellular location is the cell membrane. In terms of biological role, ATP-dependent serine protease that mediates the selective degradation of mutant and abnormal proteins as well as certain short-lived regulatory proteins. Degrades polypeptides processively. This is Archaeal Lon protease from Thermoplasma acidophilum (strain ATCC 25905 / DSM 1728 / JCM 9062 / NBRC 15155 / AMRC-C165).